Consider the following 817-residue polypeptide: MSNHKILTIDNLSLQEFDSEAELIPLLTPEDEEEMNNEELPVSLPILPLRNTVLFPGVVIPISAGRDKSIKLINDANAGGKIIGVVSQINEEDEDPSKDDIHKIGTVARILRVLKMPDGNVTVILQGKKRFEIDEVVSEEPYMTASIKEVSEERPDENDSEFTAILDSVKELAIQIIKESPNIPSEATFAIKNIESQSFLINFVSSNMNLSVKEKQGLLSINGLKERALETLRYMNVELQKLELKNDIQSKVRFDLDQQQREYFLHQQMKTIQEELGGVSQEEEMDEMGQKAKTKKWDEKTQKHFEKELSKMRRMNPQSPDFGIQRNYLELFLELPWGEYSKDKFDLKHAQKVLDKDHFGLDEVKKRMIEHLAVLKLRNDMKSPIICLTGPPGVGKTSIGRSVAEALGREYVRISLGGLRDEAEIRGHRKTYIGAMPGRIIQSLKKAGTSNPVFILDEIDKLSSGNSGDPSSALLEVLDPEQNNAFYDNFLEMGYDLSKVMFIATSNNMAAIQPALRDRMEVIKMSGYTIEEKVEIAKRHLFPKQLEAHGLTSKDLTIGKKQLEKIVEGYTRESGVRNLETKIAQVIRNAAKAVAMEEEYNKKVTDEDIVKVLGVPRLERDKYENNDVAGVVTGLAWTSVGGDILFIESLISEGKGALTITGNLGNVMKESATIALEYIKANAKKLGLAIELFQKYNIHLHVPEGATPKDGPSAGIAMLTSLVSLLTQKKVKKSLAMTGEITLRGKVLPVGGIKEKILAAKRAGIKEIILCHENKSDIDEIKEEYLEGLTFHYVKEMSEVLAIALTDQNVKNAKTLK.

In terms of domain architecture, Lon N-terminal spans 44–239 (LPILPLRNTV…ETLRYMNVEL (196 aa)). 390-397 (GPPGVGKT) contributes to the ATP binding site. The region spanning 626–807 (NDVAGVVTGL…SEVLAIALTD (182 aa)) is the Lon proteolytic domain. Active-site residues include Ser-713 and Lys-756.

This sequence belongs to the peptidase S16 family. As to quaternary structure, homohexamer. Organized in a ring with a central cavity.

The protein resides in the cytoplasm. The catalysed reaction is Hydrolysis of proteins in presence of ATP.. Its function is as follows. ATP-dependent serine protease that mediates the selective degradation of mutant and abnormal proteins as well as certain short-lived regulatory proteins. Required for cellular homeostasis and for survival from DNA damage and developmental changes induced by stress. Degrades polypeptides processively to yield small peptide fragments that are 5 to 10 amino acids long. Binds to DNA in a double-stranded, site-specific manner. The protein is Lon protease of Flavobacterium johnsoniae (strain ATCC 17061 / DSM 2064 / JCM 8514 / BCRC 14874 / CCUG 350202 / NBRC 14942 / NCIMB 11054 / UW101) (Cytophaga johnsonae).